The primary structure comprises 249 residues: Protein obstructor-E (249 aa).

The N-terminal stretch at 1–21 (MAKILISALLCVAMFGSMALG) is a signal peptide. The region spanning 22–80 (SPECPTPNGRFASGDQCDSYTECQDGTPVEKLCPDGLLFHQRTKATGECTYAPYSTCKE) is the Chitin-binding type-2 1 domain. Cys-54 and Cys-70 are disulfide-bonded. The N-linked (GlcNAc...) asparagine glycan is linked to Asn-88. Chitin-binding type-2 domains follow at residues 90-148 (TEEC…SCNA) and 170-227 (VDVS…ECYA). Intrachain disulfides connect Cys-124–Cys-137 and Cys-203–Cys-216.

Uniformly expressed throughout the cuticle of third instar larva.

The protein resides in the secreted. The protein localises to the extracellular space. Its subcellular location is the extracellular matrix. Functionally, chitin-binding protein that is important for the longitudinal contraction and lateral expansion of the larval cuticle during its conversion into the oval-shaped puparium case. Essential for survival to the second instar larval stage. Confers the orientated contractility and expandability of the larval cuticle by regulating the arrangement of chitin and the formation of supracellular ridges on the cuticle of third instar larvae. Essential for determining pupal body shape; required for the orientated shape change of the cuticle during metamorphosis which involves changes in the morphology of the supracellular ridges. Mainly involved in regulating pupal shape. In terms of biological role, mainly involved in larvae survival, possibly by maintaining the normal morphology of the larval hindgut during development. This chain is Protein obstructor-E, found in Drosophila melanogaster (Fruit fly).